A 258-amino-acid polypeptide reads, in one-letter code: Ubiquinone/menaquinone biosynthesis C-methyltransferase UbiE (258 aa).

A disordered region spans residues 1–20; that stretch reads MSESRTSADGGMETSYGFRE. S-adenosyl-L-methionine-binding positions include Thr-81, Asp-102, and 130–131; that span reads NA.

Belongs to the class I-like SAM-binding methyltransferase superfamily. MenG/UbiE family.

The enzyme catalyses a 2-demethylmenaquinol + S-adenosyl-L-methionine = a menaquinol + S-adenosyl-L-homocysteine + H(+). The catalysed reaction is a 2-methoxy-6-(all-trans-polyprenyl)benzene-1,4-diol + S-adenosyl-L-methionine = a 5-methoxy-2-methyl-3-(all-trans-polyprenyl)benzene-1,4-diol + S-adenosyl-L-homocysteine + H(+). It functions in the pathway quinol/quinone metabolism; menaquinone biosynthesis; menaquinol from 1,4-dihydroxy-2-naphthoate: step 2/2. It participates in cofactor biosynthesis; ubiquinone biosynthesis. Methyltransferase required for the conversion of demethylmenaquinol (DMKH2) to menaquinol (MKH2) and the conversion of 2-polyprenyl-6-methoxy-1,4-benzoquinol (DDMQH2) to 2-polyprenyl-3-methyl-6-methoxy-1,4-benzoquinol (DMQH2). The chain is Ubiquinone/menaquinone biosynthesis C-methyltransferase UbiE from Rhizobium etli (strain CIAT 652).